Consider the following 448-residue polypeptide: Phosphohexose mutases (448 aa).

Ser-97 acts as the Phosphoserine intermediate in catalysis. Positions 97, 237, 239, and 241 each coordinate Mg(2+).

This sequence belongs to the phosphohexose mutase family. It depends on Mg(2+) as a cofactor.

The enzyme catalyses alpha-D-glucose 1-phosphate = alpha-D-glucose 6-phosphate. It carries out the reaction alpha-D-mannose 1-phosphate = D-mannose 6-phosphate. Its pathway is nucleotide-sugar biosynthesis; GDP-alpha-D-mannose biosynthesis; alpha-D-mannose 1-phosphate from D-fructose 6-phosphate: step 2/2. Involved in xanthan production. The protein is Phosphohexose mutases (xanA) of Xanthomonas campestris pv. campestris (strain ATCC 33913 / DSM 3586 / NCPPB 528 / LMG 568 / P 25).